The chain runs to 454 residues: Asparagine--tRNA ligase (454 aa).

It belongs to the class-II aminoacyl-tRNA synthetase family. In terms of assembly, homodimer.

The protein resides in the cytoplasm. It catalyses the reaction tRNA(Asn) + L-asparagine + ATP = L-asparaginyl-tRNA(Asn) + AMP + diphosphate + H(+). The sequence is that of Asparagine--tRNA ligase from Mesoplasma florum (strain ATCC 33453 / NBRC 100688 / NCTC 11704 / L1) (Acholeplasma florum).